A 197-amino-acid polypeptide reads, in one-letter code: Large ribosomal subunit protein bL25 (197 aa).

It belongs to the bacterial ribosomal protein bL25 family. CTC subfamily. As to quaternary structure, part of the 50S ribosomal subunit; part of the 5S rRNA/L5/L18/L25 subcomplex. Contacts the 5S rRNA. Binds to the 5S rRNA independently of L5 and L18.

Functionally, this is one of the proteins that binds to the 5S RNA in the ribosome where it forms part of the central protuberance. The chain is Large ribosomal subunit protein bL25 from Pseudomonas putida (strain GB-1).